A 207-amino-acid chain; its full sequence is Protein GrpE (207 aa).

This sequence belongs to the GrpE family. As to quaternary structure, homodimer.

Its subcellular location is the cytoplasm. In terms of biological role, participates actively in the response to hyperosmotic and heat shock by preventing the aggregation of stress-denatured proteins, in association with DnaK and GrpE. It is the nucleotide exchange factor for DnaK and may function as a thermosensor. Unfolded proteins bind initially to DnaJ; upon interaction with the DnaJ-bound protein, DnaK hydrolyzes its bound ATP, resulting in the formation of a stable complex. GrpE releases ADP from DnaK; ATP binding to DnaK triggers the release of the substrate protein, thus completing the reaction cycle. Several rounds of ATP-dependent interactions between DnaJ, DnaK and GrpE are required for fully efficient folding. The protein is Protein GrpE of Pelodictyon phaeoclathratiforme (strain DSM 5477 / BU-1).